Here is a 118-residue protein sequence, read N- to C-terminus: Appetite-regulating hormone (118 aa).

The first 24 residues, 1 to 24 (MPSTGTICSLLLLSVLLMADLAMA), serve as a signal peptide directing secretion. A lipid anchor (O-decanoyl serine; alternate) is attached at serine 27. The O-hexanoyl serine; alternate moiety is linked to residue serine 27. A lipid anchor (O-octanoyl serine; alternate) is attached at serine 27. The tract at residues 29–50 (LSPEHQKVQQRKESKKPAAKLK) is disordered. Positions 32–44 (EHQKVQQRKESKK) are enriched in basic and acidic residues. Residues 53 to 76 (ALEGWLGPEDSGEVEGTEDKLEIR) constitute a propeptide, removed in mature form. Leucine 99 is subject to Leucine amide. The propeptide at 100-118 (GKFLQDILWEEVTEAPADK) is removed in mature form.

It belongs to the motilin family. O-octanoylated by GOAT/MBOAT4. O-octanoylation is essential for ghrelin activity. Post-translationally, amidation of Leu-99 is essential for obestatin activity.

It localises to the secreted. Ghrelin is the ligand for growth hormone secretagogue receptor type 1 (GHSR). Induces the release of growth hormone from the pituitary. Has an appetite-stimulating effect, induces adiposity and stimulates gastric acid secretion. Involved in growth regulation. Functionally, obestatin may be the ligand for GPR39. May have an appetite-reducing effect resulting in decreased food intake. May reduce gastric emptying activity and jejunal motility. This is Appetite-regulating hormone (GHRL) from Sus scrofa (Pig).